The sequence spans 294 residues: Small ribosomal subunit biogenesis GTPase RsgA 2, mitochondrial (294 aa).

A mitochondrion-targeting transit peptide spans 1 to 68; that stretch reads MQTFSSAAAL…RSFLAPVLPL (68 aa). The 140-residue stretch at 155-294 folds into the CP-type G domain; sequence VSEVLDPPVA…VSFFLSYFIL (140 aa). 255-263 is a GTP binding site; it reads GPSGVGKSS.

The protein belongs to the TRAFAC class YlqF/YawG GTPase family.

The protein localises to the mitochondrion. This Arabidopsis thaliana (Mouse-ear cress) protein is Small ribosomal subunit biogenesis GTPase RsgA 2, mitochondrial.